We begin with the raw amino-acid sequence, 293 residues long: MAKPFKIIGLIGKQKDPRIAESLQQVADFLVAKGLTLMIDQETAALFPSHHWEAVTRHELGQRCDLAIVVGGDGTLLHVARSLADSGIPLLGIKLGRLGFLADVLPEALGTDLAAMLAGHYREEERFLLQAELEQESQSYLIGTALNDITTHIREVVRLIEFETYINGRFLNSQRSDGLVVATPTGSTAYALSAGGPILDVNLNAMVLVSICPHALSNRPLVIDADSLVEIVISEYNTTPGQVSCDGQPGIALKVGDKVKIYKRPGRVRLIHPTAHDHYSILRAKLHWGRKLG.

The active-site Proton acceptor is aspartate 73. NAD(+) contacts are provided by residues 73 to 74 (DG), histidine 78, 147 to 148 (ND), arginine 158, arginine 175, aspartate 177, 188 to 193 (TAYALS), and glutamine 248.

It belongs to the NAD kinase family. The cofactor is a divalent metal cation.

It is found in the cytoplasm. The catalysed reaction is NAD(+) + ATP = ADP + NADP(+) + H(+). Involved in the regulation of the intracellular balance of NAD and NADP, and is a key enzyme in the biosynthesis of NADP. Catalyzes specifically the phosphorylation on 2'-hydroxyl of the adenosine moiety of NAD to yield NADP. This is NAD kinase from Nitrosococcus oceani (strain ATCC 19707 / BCRC 17464 / JCM 30415 / NCIMB 11848 / C-107).